Here is a 45-residue protein sequence, read N- to C-terminus: Monellin chain A (45 aa).

In terms of assembly, heterodimer of an A chain and a B chain.

Taste-modifying protein; intensely sweet-tasting protein. The protein is Monellin chain A of Dioscoreophyllum cumminsii (Serendipity berry).